We begin with the raw amino-acid sequence, 274 residues long: Diaminopimelate epimerase (274 aa).

Substrate contacts are provided by asparagine 11, glutamine 44, and asparagine 64. Cysteine 73 serves as the catalytic Proton donor. Residues 74 to 75 (GN), asparagine 157, asparagine 190, and 208 to 209 (ER) each bind substrate. The Proton acceptor role is filled by cysteine 217. 218–219 (GS) contributes to the substrate binding site.

Belongs to the diaminopimelate epimerase family. In terms of assembly, homodimer.

It localises to the cytoplasm. The catalysed reaction is (2S,6S)-2,6-diaminopimelate = meso-2,6-diaminopimelate. It functions in the pathway amino-acid biosynthesis; L-lysine biosynthesis via DAP pathway; DL-2,6-diaminopimelate from LL-2,6-diaminopimelate: step 1/1. In terms of biological role, catalyzes the stereoinversion of LL-2,6-diaminopimelate (L,L-DAP) to meso-diaminopimelate (meso-DAP), a precursor of L-lysine and an essential component of the bacterial peptidoglycan. This Histophilus somni (strain 2336) (Haemophilus somnus) protein is Diaminopimelate epimerase.